We begin with the raw amino-acid sequence, 673 residues long: DNA ligase (673 aa).

NAD(+) is bound by residues 34–38 (DAEYD), 83–84 (SL), and Glu-116. Lys-118 serves as the catalytic N6-AMP-lysine intermediate. Residues Arg-139, Glu-176, Lys-293, and Lys-317 each coordinate NAD(+). Cys-411, Cys-414, Cys-429, and Cys-435 together coordinate Zn(2+). Residues 595–673 (NQQNPFFGKT…EDEFLKWVNS (79 aa)) enclose the BRCT domain.

The protein belongs to the NAD-dependent DNA ligase family. LigA subfamily. Mg(2+) serves as cofactor. Mn(2+) is required as a cofactor.

It catalyses the reaction NAD(+) + (deoxyribonucleotide)n-3'-hydroxyl + 5'-phospho-(deoxyribonucleotide)m = (deoxyribonucleotide)n+m + AMP + beta-nicotinamide D-nucleotide.. In terms of biological role, DNA ligase that catalyzes the formation of phosphodiester linkages between 5'-phosphoryl and 3'-hydroxyl groups in double-stranded DNA using NAD as a coenzyme and as the energy source for the reaction. It is essential for DNA replication and repair of damaged DNA. This chain is DNA ligase, found in Legionella pneumophila (strain Corby).